Consider the following 508-residue polypeptide: Photosystem II CP47 reaction center protein (508 aa).

A run of 6 helical transmembrane segments spans residues 21-36 (SVHIMHTALVSGWAGS), 101-115 (IVFSGLCFLAAIWHW), 140-156 (GIHLFLAGVACFGFGAF), 203-218 (IAAGTLGILAGLFHLS), 237-252 (VLSSSIAAVFFAAFVV), and 457-472 (TFALLFFFGHIWHGAR).

The protein belongs to the PsbB/PsbC family. PsbB subfamily. As to quaternary structure, PSII is composed of 1 copy each of membrane proteins PsbA, PsbB, PsbC, PsbD, PsbE, PsbF, PsbH, PsbI, PsbJ, PsbK, PsbL, PsbM, PsbT, PsbX, PsbY, PsbZ, Psb30/Ycf12, at least 3 peripheral proteins of the oxygen-evolving complex and a large number of cofactors. It forms dimeric complexes. The cofactor is Binds multiple chlorophylls. PSII binds additional chlorophylls, carotenoids and specific lipids..

The protein localises to the plastid. It is found in the chloroplast thylakoid membrane. Functionally, one of the components of the core complex of photosystem II (PSII). It binds chlorophyll and helps catalyze the primary light-induced photochemical processes of PSII. PSII is a light-driven water:plastoquinone oxidoreductase, using light energy to abstract electrons from H(2)O, generating O(2) and a proton gradient subsequently used for ATP formation. In Oryza sativa subsp. indica (Rice), this protein is Photosystem II CP47 reaction center protein.